A 30-amino-acid polypeptide reads, in one-letter code: Trypsin inhibitor 2 (30 aa).

3 disulfide bridges follow: cysteine 3–cysteine 20, cysteine 10–cysteine 22, and cysteine 16–cysteine 29.

It belongs to the protease inhibitor I7 (squash-type serine protease inhibitor) family.

Its subcellular location is the secreted. Functionally, inhibits trypsin. The polypeptide is Trypsin inhibitor 2 (Luffa aegyptiaca (Sponge gourd)).